We begin with the raw amino-acid sequence, 273 residues long: Shikimate dehydrogenase (NADP(+)) (273 aa).

Residues 15–17 (SQS) and T62 each bind shikimate. Residue K66 is the Proton acceptor of the active site. Position 78 (E78) interacts with NADP(+). Shikimate-binding residues include N87 and D102. Residues 127-131 (GAGGA), 151-156 (NRTVIK), and M215 contribute to the NADP(+) site. Y217 contacts shikimate. Position 239 (G239) interacts with NADP(+).

Belongs to the shikimate dehydrogenase family. As to quaternary structure, homodimer.

The enzyme catalyses shikimate + NADP(+) = 3-dehydroshikimate + NADPH + H(+). The protein operates within metabolic intermediate biosynthesis; chorismate biosynthesis; chorismate from D-erythrose 4-phosphate and phosphoenolpyruvate: step 4/7. Involved in the biosynthesis of the chorismate, which leads to the biosynthesis of aromatic amino acids. Catalyzes the reversible NADPH linked reduction of 3-dehydroshikimate (DHSA) to yield shikimate (SA). This chain is Shikimate dehydrogenase (NADP(+)), found in Chromobacterium violaceum (strain ATCC 12472 / DSM 30191 / JCM 1249 / CCUG 213 / NBRC 12614 / NCIMB 9131 / NCTC 9757 / MK).